We begin with the raw amino-acid sequence, 223 residues long: Sigma non-opioid intracellular receptor 1 (223 aa).

At 1–7 (MAVLSSR) the chain is on the lumenal side. Residues 8-29 (AMRAALGLAVLAVVIQLLRTWL) traverse the membrane as a helical segment. Residues 30–223 (SSKSYLFNQK…HTYLSELGLS (194 aa)) are Cytoplasmic-facing. The tract at residues 98–105 (SLTEYILL) is important for ligand-binding. The C-terminal hydrophobic region stretch occupies residues 176-223 (FIPSTMGFALADTIFSTQDFCTLFYTFRIYARCLLLETHTYLSELGLS).

This sequence belongs to the ERG2 family. Homotrimer.

It is found in the nucleus inner membrane. The protein resides in the nucleus outer membrane. Its subcellular location is the nucleus envelope. It localises to the cytoplasmic vesicle. The protein localises to the endoplasmic reticulum membrane. It is found in the membrane. In terms of biological role, may function in lipid transport from the endoplasmic reticulum and be involved in a wide array of cellular functions probably through regulation of the biogenesis of lipid microdomains at the plasma membrane. May regulate calcium efflux at the endoplasmic reticulum. This is Sigma non-opioid intracellular receptor 1 (SIGMAR1) from Taricha granulosa (Roughskin newt).